An 80-amino-acid polypeptide reads, in one-letter code: Turripeptide VI/VII-01 (80 aa).

Positions 1 to 22 are cleaved as a signal peptide; the sequence is MRLQLILTITLLLTSFMGYRDA. Positions 23–36 are excised as a propeptide; the sequence is AVIQGKTERSAMKM. Disulfide bonds link Cys-48/Cys-61, Cys-50/Cys-65, and Cys-60/Cys-70. A propeptide spanning residues 77 to 80 is cleaved from the precursor; it reads SSAI.

Expressed by the venom duct.

It localises to the secreted. The protein is Turripeptide VI/VII-01 of Gemmula speciosa (Splendid gem-turris).